The following is a 63-amino-acid chain: Large ribosomal subunit protein uL30 (63 aa).

The protein belongs to the universal ribosomal protein uL30 family. In terms of assembly, part of the 50S ribosomal subunit.

In Geobacillus stearothermophilus (Bacillus stearothermophilus), this protein is Large ribosomal subunit protein uL30.